Consider the following 233-residue polypeptide: Protein Atu3128 (233 aa).

Belongs to the glycosyl hydrolase 88 family.

In terms of biological role, seems to regulate the surface properties of the bacterium in the presence of plant cells or plant cell extracts. Mutations in this protein are responsible for an increased aggregation of the bacteria in the presence of pea root cap cells. This chain is Protein Atu3128, found in Agrobacterium fabrum (strain C58 / ATCC 33970) (Agrobacterium tumefaciens (strain C58)).